We begin with the raw amino-acid sequence, 492 residues long: MAPRCWRWWPWSSWTRTRLPPSRSIQNFGQHFSTQEQTPQICVVGSGPAGFYTAQHLLKHHSRAHVDIYEKQLVPFGLVRFGVAPDHPEVKNVINTFTQTARSDRCAFYGNVEVGRDVTVQELQDAYHAVVLSYGAEDHQALDIPGEELPGVFSARAFVGWYNGLPENRELAPDLSCDTAVILGQGNVALDVARILLTPPDHLEKTDITEAALGALRQSRVKTVWIVGRRGPLQVAFTIKELREMIQLPGTRPMLDPADFLGLQDRIKEAARPRKRLMELLLRTATEKPGVEEAARRASASRAWGLRFFRSPQQVLPSPDGRRAAGIRLAVTRLEGIGEATRAVPTGDVEDLPCGLVLSSIGYKSRPIDPSVPFDPKLGVVPNMEGRVVDVPGLYCSGWVKRGPTGVITTTMTDSFLTGQILLQDLKAGHLPSGPRPGSAFIKALLDSRGVWPVSFSDWEKLDAEEVSRGQASGKPREKLLDPQEMLRLLGH.

A mitochondrion-targeting transit peptide spans 1–32 (MAPRCWRWWPWSSWTRTRLPPSRSIQNFGQHF). The FAD site is built by Ala49, Glu70, Leu78, and Val114. NADP(+)-binding positions include 185–188 (QGNV), 229–230 (RR), and Glu241. Phosphoserine is present on residues Ser311 and Ser318. FAD is bound by residues Trp399 and 406–408 (GVI). Residue Gly406 participates in NADP(+) binding.

Belongs to the ferredoxin--NADP reductase type 1 family. As to quaternary structure, monomer. Interacts directly with FDX1. FAD is required as a cofactor. As to expression, detected in adrenal cortex and corpus luteum (at protein level).

Its subcellular location is the mitochondrion inner membrane. The catalysed reaction is 2 reduced [adrenodoxin] + NADP(+) + H(+) = 2 oxidized [adrenodoxin] + NADPH. The enzyme catalyses 2 reduced [2Fe-2S]-[ferredoxin] + NADP(+) + H(+) = 2 oxidized [2Fe-2S]-[ferredoxin] + NADPH. It functions in the pathway steroid metabolism; cholesterol metabolism. Its function is as follows. Serves as the first electron transfer protein in all the mitochondrial P450 systems including cholesterol side chain cleavage in all steroidogenic tissues, steroid 11-beta hydroxylation in the adrenal cortex, 25-OH-vitamin D3-24 hydroxylation in the kidney, and sterol C-27 hydroxylation in the liver. Also acts as a ferredoxin--NADP(+) reductase essential for coenzyme Q biosynthesis: together with FDX2, transfers the electrons required for the hydroxylation reaction performed by COQ6. The sequence is that of NADPH:adrenodoxin oxidoreductase, mitochondrial (FDXR) from Bos taurus (Bovine).